The sequence spans 127 residues: MGQLSVLGFIALGGAFGACSRYLISELCVMLLGRGFPYGTLTVNVVGSFIMGLLIAAFETELMVTDPWRQIIGLGFLGALTTFSTFSMDNVLLMQQGAFFKMGLNVLLNVVLSISAAWIGFQLLMRS.

Helical transmembrane passes span 4–24, 38–58, 71–91, and 104–124; these read LSVL…RYLI, YGTL…IAAF, IIGL…MDNV, and LNVL…FQLL. The Na(+) site is built by glycine 78 and threonine 81.

This sequence belongs to the fluoride channel Fluc/FEX (TC 1.A.43) family.

The protein resides in the cell inner membrane. The catalysed reaction is fluoride(in) = fluoride(out). Na(+) is not transported, but it plays an essential structural role and its presence is essential for fluoride channel function. Its function is as follows. Fluoride-specific ion channel. Important for reducing fluoride concentration in the cell, thus reducing its toxicity. The protein is Fluoride-specific ion channel FluC of Vibrio campbellii (strain ATCC BAA-1116).